Consider the following 1058-residue polypeptide: Carbamoyl phosphate synthase large chain (1058 aa).

The carboxyphosphate synthetic domain stretch occupies residues 1-401 (MPKRKDIQKI…SLLKACRSLE (401 aa)). ATP-binding residues include arginine 129, arginine 169, glycine 175, glycine 176, arginine 208, isoleucine 210, glutamate 215, glycine 241, isoleucine 242, histidine 243, glutamine 284, and glutamate 298. The region spanning 133–327 (KQLMQELDQP…IAKLAAKIAV (195 aa)) is the ATP-grasp 1 domain. Residues glutamine 284, glutamate 298, and asparagine 300 each contribute to the Mg(2+) site. Positions 284, 298, and 300 each coordinate Mn(2+). The oligomerization domain stretch occupies residues 402–546 (IGVCHNEMTS…YSTYELENES (145 aa)). The carbamoyl phosphate synthetic domain stretch occupies residues 547–929 (VQSNKESILV…ALYKAFEANN (383 aa)). One can recognise an ATP-grasp 2 domain in the interval 671–861 (EKALKELGIP…MAQIATKLIL (191 aa)). ATP is bound by residues arginine 707, serine 746, isoleucine 748, glutamate 752, glycine 777, valine 778, histidine 779, serine 780, glutamine 820, and glutamate 832. Mg(2+) contacts are provided by glutamine 820, glutamate 832, and asparagine 834. Mn(2+) contacts are provided by glutamine 820, glutamate 832, and asparagine 834. One can recognise an MGS-like domain in the interval 930–1058 (SHLSEFGQIV…ESRCFNIEAI (129 aa)). An allosteric domain region spans residues 930–1058 (SHLSEFGQIV…ESRCFNIEAI (129 aa)).

This sequence belongs to the CarB family. In terms of assembly, composed of two chains; the small (or glutamine) chain promotes the hydrolysis of glutamine to ammonia, which is used by the large (or ammonia) chain to synthesize carbamoyl phosphate. Tetramer of heterodimers (alpha,beta)4. The cofactor is Mg(2+). Mn(2+) is required as a cofactor.

The catalysed reaction is hydrogencarbonate + L-glutamine + 2 ATP + H2O = carbamoyl phosphate + L-glutamate + 2 ADP + phosphate + 2 H(+). It catalyses the reaction hydrogencarbonate + NH4(+) + 2 ATP = carbamoyl phosphate + 2 ADP + phosphate + 2 H(+). It functions in the pathway amino-acid biosynthesis; L-arginine biosynthesis; carbamoyl phosphate from bicarbonate: step 1/1. It participates in pyrimidine metabolism; UMP biosynthesis via de novo pathway; (S)-dihydroorotate from bicarbonate: step 1/3. Its function is as follows. Large subunit of the glutamine-dependent carbamoyl phosphate synthetase (CPSase). CPSase catalyzes the formation of carbamoyl phosphate from the ammonia moiety of glutamine, carbonate, and phosphate donated by ATP, constituting the first step of 2 biosynthetic pathways, one leading to arginine and/or urea and the other to pyrimidine nucleotides. The large subunit (synthetase) binds the substrates ammonia (free or transferred from glutamine from the small subunit), hydrogencarbonate and ATP and carries out an ATP-coupled ligase reaction, activating hydrogencarbonate by forming carboxy phosphate which reacts with ammonia to form carbamoyl phosphate. This is Carbamoyl phosphate synthase large chain from Streptococcus pyogenes serotype M18 (strain MGAS8232).